A 395-amino-acid chain; its full sequence is MATLQAIKYSRGKLLVLDQLRLPHENHYDEVSTAEEAFDCIRSMRVRGAPAIAIVAALAHAVELHNGDCTATEPEEVIAHIEKRLDYLKESRPTAVDLSNAITLLKLATRAANLEGLAHPEAKEAILNTYIQTAEEILAKDLHNNTSIGSYGTAWLQQQYSASSEKPISVLTHCNTGSLATSGHGTALGIIRTLHSEGLLKHAYCTETRPYNQGSRLTSFELVFEGIPSTLITDSMAGALFNLHRERMNIGAVIVGADRVVRNGDTANKIGTYQLAVLARHHGVKFVVAAPTTSIDLETGNGSAIEIEERKREELTQISGAIVNEDGTVDTSKTARVAIADQRIGVWNPAFDVTPHELIDAIVTERGTVVKGADGKFDFSQVLPERLASVAARQL.

Asp258 (proton donor) is an active-site residue.

Belongs to the eIF-2B alpha/beta/delta subunits family. MtnA subfamily.

It localises to the cytoplasm. The protein localises to the nucleus. The catalysed reaction is 5-(methylsulfanyl)-alpha-D-ribose 1-phosphate = 5-(methylsulfanyl)-D-ribulose 1-phosphate. It participates in amino-acid biosynthesis; L-methionine biosynthesis via salvage pathway; L-methionine from S-methyl-5-thio-alpha-D-ribose 1-phosphate: step 1/6. Catalyzes the interconversion of methylthioribose-1-phosphate (MTR-1-P) into methylthioribulose-1-phosphate (MTRu-1-P). The chain is Methylthioribose-1-phosphate isomerase from Podospora anserina (strain S / ATCC MYA-4624 / DSM 980 / FGSC 10383) (Pleurage anserina).